A 635-amino-acid polypeptide reads, in one-letter code: 1-deoxy-D-xylulose-5-phosphate synthase (635 aa).

Residues His74 and 115–117 (GHA) each bind thiamine diphosphate. Asp146 lines the Mg(2+) pocket. Residues 147-148 (GA), Asn175, Tyr285, and Glu367 contribute to the thiamine diphosphate site. Residue Asn175 participates in Mg(2+) binding.

It belongs to the transketolase family. DXPS subfamily. Homodimer. Requires Mg(2+) as cofactor. Thiamine diphosphate is required as a cofactor.

It catalyses the reaction D-glyceraldehyde 3-phosphate + pyruvate + H(+) = 1-deoxy-D-xylulose 5-phosphate + CO2. It participates in metabolic intermediate biosynthesis; 1-deoxy-D-xylulose 5-phosphate biosynthesis; 1-deoxy-D-xylulose 5-phosphate from D-glyceraldehyde 3-phosphate and pyruvate: step 1/1. In terms of biological role, catalyzes the acyloin condensation reaction between C atoms 2 and 3 of pyruvate and glyceraldehyde 3-phosphate to yield 1-deoxy-D-xylulose-5-phosphate (DXP). The polypeptide is 1-deoxy-D-xylulose-5-phosphate synthase (Anaeromyxobacter sp. (strain Fw109-5)).